The primary structure comprises 1704 residues: Phospholipid-transporting ATPase ABCA3 (1704 aa).

N-linked (GlcNAc...) asparagine glycosylation is present at asparagine 14. A helical transmembrane segment spans residues 22–42; that stretch reads VLVTVLELFLPLLFSGILIWL. Asparagine 53, asparagine 124, asparagine 140, and asparagine 228 each carry an N-linked (GlcNAc...) asparagine glycan. Helical transmembrane passes span 261 to 283, 307 to 327, 344 to 364, 373 to 393, 405 to 425, and 447 to 467; these read YQLPLLLMLSFTYTSLTIIRAVV, AWFLMFFLFFLIVVSFMTLLF, SLVLAFLLCFAISSISFSFMV, IAAAVGGFLYFFTYTPYFFVA, LLSCLLSNVAMAMGAQLIGKF, and FCFGQVLGMLLLDSALYGLVT. In terms of domain architecture, ABC transporter 1 spans 530–763; the sequence is IKIKHLSKVF…YGAGYHMTLV (234 aa). 566–573 contacts ATP; sequence GHNGAGKT. N-linked (GlcNAc...) asparagine glycosylation occurs at asparagine 620. The next 7 helical transmembrane spans lie at 925–945, 1100–1120, 1144–1164, 1183–1203, 1213–1233, 1245–1265, and 1310–1330; these read MVAAQVLVPLTCLTLALLAIH, IALNLLIAMAFLASTFSILAV, SALLWDLISFLVPSLLLLVVF, LLLMLYGWAIIPLMYLMSFFF, LTIFNILSGIATFIMVTIMRI, LDHVFLVLPNHCLGMAVSNFY, and MAASGGIYLTLLFLIETNLLW. Asparagine 1350 is a glycosylation site (N-linked (GlcNAc...) asparagine). An ABC transporter 2 domain is found at 1381-1614; it reads LIINELSKVY…FGSGYSLQAK (234 aa). Position 1416–1423 (1416–1423) interacts with ATP; that stretch reads GFNGAGKT.

Belongs to the ABC transporter superfamily. ABCA family. As to quaternary structure, homooligomer; disulfide-linked. Post-translationally, N-glycosylated. Localization at intracellular vesicles is accompanied by processing of oligosaccharide from high mannose type to complex type. N-linked glycosylation at Asn-124 and Asn-140 is required for stability and efficient anterograde trafficking and prevents from proteasomal degradation. Proteolytically cleaved by CTSL and to a lower extent by CTSB within multivesicular bodies (MVB) and lamellar bodies (LB) leading to a mature form of 150 kDa. Highly expressed in the lung and moderately expressed in the kidney, adipose, macrophage, and spleen.

The protein localises to the endosome. It is found in the multivesicular body membrane. It localises to the cytoplasmic vesicle membrane. Its subcellular location is the late endosome membrane. The protein resides in the lysosome membrane. The enzyme catalyses a 1,2-diacyl-sn-glycero-3-phospho-(1'-sn-glycerol)(in) + ATP + H2O = a 1,2-diacyl-sn-glycero-3-phospho-(1'-sn-glycerol)(out) + ADP + phosphate + H(+). It carries out the reaction a 1,2-diacyl-sn-glycero-3-phosphocholine(in) + ATP + H2O = a 1,2-diacyl-sn-glycero-3-phosphocholine(out) + ADP + phosphate + H(+). It catalyses the reaction ATP + H2O + phospholipidSide 1 = ADP + phosphate + phospholipidSide 2.. The catalysed reaction is ATP + H2O + xenobioticSide 1 = ADP + phosphate + xenobioticSide 2.. The enzyme catalyses 1,2-dihexadecanoyl-sn-glycero-3-phosphocholine(in) + ATP + H2O = 1,2-dihexadecanoyl-sn-glycero-3-phosphocholine(out) + ADP + phosphate + H(+). It carries out the reaction cholesterol(in) + ATP + H2O = cholesterol(out) + ADP + phosphate + H(+). Its function is as follows. Catalyzes the ATP-dependent transport of phospholipids such as phosphatidylcholine and phosphoglycerol from the cytoplasm into the lumen side of lamellar bodies, in turn participates in the lamellar bodies biogenesis and homeostasis of pulmonary surfactant. Transports preferentially phosphatidylcholine containing short acyl chains. In addition plays a role as an efflux transporter of miltefosine across macrophage membranes and free cholesterol (FC) through intralumenal vesicles by removing FC from the cell as a component of surfactant and protects cells from free cholesterol toxicity. This Mus musculus (Mouse) protein is Phospholipid-transporting ATPase ABCA3 (Abca3).